The primary structure comprises 57 residues: Small ribosomal subunit protein bS21 (57 aa).

The disordered stretch occupies residues 22 to 57; sequence QCSKSGVLSEAKKRKHYEKPSEKRKRKATEKRNSRK. The segment covering 33 to 57 has biased composition (basic residues); it reads KKRKHYEKPSEKRKRKATEKRNSRK.

The protein belongs to the bacterial ribosomal protein bS21 family.

The protein is Small ribosomal subunit protein bS21 of Natranaerobius thermophilus (strain ATCC BAA-1301 / DSM 18059 / JW/NM-WN-LF).